The chain runs to 665 residues: Coiled-coil domain-containing protein 138 (665 aa).

Thr48 carries the post-translational modification Phosphothreonine. Ser49 carries the phosphoserine modification. The stretch at 198–323 forms a coiled coil; sequence QQKFAEELQK…YEFMTIQRLK (126 aa). Residue Ser469 is modified to Phosphoserine.

This Macaca fascicularis (Crab-eating macaque) protein is Coiled-coil domain-containing protein 138 (CCDC138).